We begin with the raw amino-acid sequence, 168 residues long: uncharacterized protein (168 aa).

4Fe-4S ferredoxin-type domains lie at 48-78 (KIPKTVIEELCIGCEGCANVCPTKAIEMIPI) and 91-122 (KIPKINPEKCVYCLYCHDFCPVFSVFNEISPI). [4Fe-4S] cluster contacts are provided by Cys58, Cys61, Cys64, Cys68, Cys100, Cys103, Cys106, and Cys110.

This is an uncharacterized protein from Methanocaldococcus jannaschii (strain ATCC 43067 / DSM 2661 / JAL-1 / JCM 10045 / NBRC 100440) (Methanococcus jannaschii).